Reading from the N-terminus, the 806-residue chain is Putative phage-related protein YobO (806 aa).

Positions 1–23 (MVHFKNCPDPSLNANSQSHPEFS) are disordered. Polar residues predominate over residues 12 to 21 (LNANSQSHPE). PbH1 repeat units follow at residues 199 to 221 (VEYGWIKDVEAINAGLHGIDITS), 237 to 259 (SRYIWIDNCVTYGSGDDGITTHY), 260 to 292 (SEYIFISNCHSGNPRGTEFAEGVSNSNGIEIDD), 294 to 315 (SRHVWLLNNFTSGNIRGVEVKA), 419 to 441 (SQNITINGIKIRGFKKAGVDINL), and 448 to 470 (TDYIKISNFDIYKSAPKGISIGG).

The chain is Putative phage-related protein YobO (yobO) from Bacillus subtilis (strain 168).